We begin with the raw amino-acid sequence, 260 residues long: Creatinine amidohydrolase (260 aa).

Residue glutamate 34 coordinates Mn(2+). Residues glutamate 34, histidine 36, and aspartate 45 each coordinate Zn(2+). Aspartate 45 lines the Mn(2+) pocket. Serine 78 serves as a coordination point for creatine. Histidine 120 is a binding site for Mn(2+). A Zn(2+)-binding site is contributed by histidine 120. Residues tyrosine 121, tryptophan 174, aspartate 175, and histidine 178 each coordinate creatine. Glutamate 183 contacts Zn(2+).

It belongs to the creatininase superfamily. As to quaternary structure, homohexamer; trimer of dimers. Requires Zn(2+) as cofactor. Mn(2+) is required as a cofactor.

It carries out the reaction creatinine + H2O = creatine. Its pathway is amine and polyamine degradation; creatinine degradation. Is markedly inactivated in vitro by heavy metal ions, N-bromosuccinimide, ethoxyformic anhydride, and dye-sensitized photooxidation. Cyclic amidohydrolase that catalyzes the reversible conversion of creatinine to creatine. Is also active toward glycocyamidine, though the reaction rate is very low, but it is completely inert toward hydantoin and its derivatives. The protein is Creatinine amidohydrolase (crnA) of Pseudomonas putida (Arthrobacter siderocapsulatus).